Consider the following 93-residue polypeptide: Cell division protein FtsB (93 aa).

Over 1–3 the chain is Cytoplasmic; sequence MRL. Residues 4–21 form a helical membrane-spanning segment; that stretch reads FILVLTLLFGWLQYTLWF. Topologically, residues 22-93 are periplasmic; it reads GKNGVSDYYT…FYRIVGEENQ (72 aa). Residues 42 to 75 adopt a coiled-coil conformation; it reads VNTKLQARNSEMYAEIDDLKQGLDAIEERARHEL.

It belongs to the FtsB family. In terms of assembly, part of a complex composed of FtsB, FtsL and FtsQ.

It is found in the cell inner membrane. In terms of biological role, essential cell division protein. May link together the upstream cell division proteins, which are predominantly cytoplasmic, with the downstream cell division proteins, which are predominantly periplasmic. In Vibrio vulnificus (strain YJ016), this protein is Cell division protein FtsB.